Consider the following 784-residue polypeptide: Ent-kaurene synthase 1, chloroplastic (784 aa).

Residues 1–28 (MNLSLCIASPLLTKSSRPTALSAIHTAS) constitute a chloroplast transit peptide. Residues Asp-528, Asp-532, Asn-672, and Glu-680 each coordinate Mg(2+). The short motif at 528–532 (DDFFD) is the DDXXD motif element.

It belongs to the terpene synthase family. It depends on Mg(2+) as a cofactor. In terms of tissue distribution, accumulates in leaves.

The protein resides in the plastid. The protein localises to the chloroplast. It catalyses the reaction ent-copalyl diphosphate = ent-kaur-16-ene + diphosphate. It functions in the pathway secondary metabolite biosynthesis; terpenoid biosynthesis. The protein operates within plant hormone biosynthesis; gibberellin biosynthesis. Functionally, involved in the biosynthesis of ent-kaurene diterpenoids natural products such as oridonin, miltiradiene, eriocalyxin B and nezukol, known to exhibit antitumor, anti-inflammatory and antibacterial activities, and in the production of gibberellins phytohormones. Catalyzes the conversion of ent-copalyl diphosphate (ent-CPP) to ent-kaurene. This is Ent-kaurene synthase 1, chloroplastic from Stevia rebaudiana (Stevia).